Reading from the N-terminus, the 180-residue chain is dCTP deaminase, dUMP-forming (180 aa).

DCTP-binding positions include 100 to 105 (RSSLGR), aspartate 117, 125 to 127 (TLE), glutamine 146, tyrosine 160, and glutamine 167. Glutamate 127 acts as the Proton donor/acceptor in catalysis.

Belongs to the dCTP deaminase family. Homotrimer.

It catalyses the reaction dCTP + 2 H2O = dUMP + NH4(+) + diphosphate. It participates in pyrimidine metabolism; dUMP biosynthesis; dUMP from dCTP: step 1/1. Functionally, bifunctional enzyme that catalyzes both the deamination of dCTP to dUTP and the hydrolysis of dUTP to dUMP without releasing the toxic dUTP intermediate. This Sulfurihydrogenibium sp. (strain YO3AOP1) protein is dCTP deaminase, dUMP-forming.